Consider the following 88-residue polypeptide: Apolipoprotein C-I (88 aa).

The N-terminal stretch at 1-26 is a signal peptide; sequence MRLFIALPVLIVVVAMALEGPAPAQA.

Belongs to the apolipoprotein C1 family.

It localises to the secreted. In terms of biological role, inhibitor of lipoprotein binding to the low density lipoprotein (LDL) receptor, LDL receptor-related protein, and very low density lipoprotein (VLDL) receptor. Associates with high density lipoproteins (HDL) and the triacylglycerol-rich lipoproteins in the plasma and makes up about 10% of the protein of the VLDL and 2% of that of HDL. Appears to interfere directly with fatty acid uptake and is also the major plasma inhibitor of cholesteryl ester transfer protein (CETP). Modulates the interaction of APOE with beta-migrating VLDL and inhibits binding of beta-VLDL to the LDL receptor-related protein. Binds free fatty acids and reduces their intracellular esterification. The polypeptide is Apolipoprotein C-I (Apoc1) (Grammomys surdaster (African woodland thicket rat)).